A 388-amino-acid chain; its full sequence is MKLSKRIENLPPYLFVQISKKIAEKRAKGEEVISFAIGDPDLPTPKHILAELCKAAEDPANHRYPETEGLPVLRKAMAEWYEKRFGVKLNPDTEVLPLIGSKEGIGHAAWCFLDPGDVALVPDPAYPVYAISSQLAGAEVFYMPLNKENNFLPDFNAIPQDVLSKAKILWINYPNNPTGAVAGLDFFKEAAEFAAKHNLAVCHDGPYSEIAFDGYRPVSFLEADGAKEVGIEFHSLSKSYNMTGWRIGMAVGNAKMIDALRRFKSNLDSGIPQAIQLMAIAALNGSQDVISQNCAVYQRRRDRLVEALRNIGMEVTAPKASLYIWAPVPEGYTSASFATELLDKTGVVVTPGTGYGTSGEGYIRLSLTVPDEQLEKGIAKLANFKSQA.

5 residues coordinate substrate: tyrosine 13, glycine 38, lysine 102, tyrosine 126, and asparagine 176. Pyridoxal 5'-phosphate contacts are provided by residues 101–102, tyrosine 126, asparagine 176, tyrosine 207, and 235–237; these read SK and SLS. An N6-(pyridoxal phosphate)lysine modification is found at lysine 238. Residue arginine 246 coordinates pyridoxal 5'-phosphate. Residue arginine 364 coordinates substrate.

The protein belongs to the class-I pyridoxal-phosphate-dependent aminotransferase family. LL-diaminopimelate aminotransferase subfamily. In terms of assembly, homodimer. Pyridoxal 5'-phosphate serves as cofactor.

It catalyses the reaction (2S,6S)-2,6-diaminopimelate + 2-oxoglutarate = (S)-2,3,4,5-tetrahydrodipicolinate + L-glutamate + H2O + H(+). It functions in the pathway amino-acid biosynthesis; L-lysine biosynthesis via DAP pathway; LL-2,6-diaminopimelate from (S)-tetrahydrodipicolinate (aminotransferase route): step 1/1. Functionally, involved in the synthesis of meso-diaminopimelate (m-DAP or DL-DAP), required for both lysine and peptidoglycan biosynthesis. Catalyzes the direct conversion of tetrahydrodipicolinate to LL-diaminopimelate. The sequence is that of LL-diaminopimelate aminotransferase from Dehalococcoides mccartyi (strain ATCC BAA-2266 / KCTC 15142 / 195) (Dehalococcoides ethenogenes (strain 195)).